A 419-amino-acid polypeptide reads, in one-letter code: ADIPOR-like receptor IZH3 (419 aa).

The disordered stretch occupies residues 1-65; that stretch reads MSHPNTHMPR…GEAGGGRSVL (65 aa). At 1-147 the chain is on the lumenal side; sequence MSHPNTHMPR…LNAYGWHNET (147 aa). Asn145 carries an N-linked (GlcNAc...) asparagine glycan. Residues 148-168 traverse the membrane as a helical segment; the sequence is INIWSHLVGAAVLAYLLCWGW. Residues 169–184 lie on the Cytoplasmic side of the membrane; that stretch reads PRSDVYRAAQVPRLAK. A helical transmembrane segment spans residues 185–205; that stretch reads WAIGAFLACGVKCMASSVAWH. Residues 206 to 225 lie on the Lumenal side of the membrane; that stretch reads TFNGTCHLKLRSRFVCVDYT. A glycan (N-linked (GlcNAc...) asparagine) is linked at Asn208. Residues 226-246 traverse the membrane as a helical segment; it reads GITLLVTASVVTTVAVTLYGL. Over 247–249 the chain is Cytoplasmic; the sequence is SRP. Residues 250–270 traverse the membrane as a helical segment; sequence LMYAYMVASIGLGTAAGVMNW. Over 271–283 the chain is Lumenal; sequence SPHFDRPEARPLR. A helical membrane pass occupies residues 284-304; sequence IAVYVGLAALGLVSFVHVWMQ. Over 305 to 311 the chain is Cytoplasmic; the sequence is VRWASAH. A helical transmembrane segment spans residues 312-332; it reads LMAPLVYKSLVWYGIGVVFYA. Residues 333 to 377 lie on the Lumenal side of the membrane; that stretch reads TLVPERWRSDVTLDCCSGPVHEAACRQFRDLPPVARKDRQFWSLW. Residues 378 to 398 form a helical membrane-spanning segment; it reads WVDYFCHSHFLWHVFVVLGVV. Topologically, residues 399–419 are cytoplasmic; it reads GHYRAVLQMSRIVWLDAGRAF.

It belongs to the ADIPOR family.

It is found in the endoplasmic reticulum membrane. Its function is as follows. ADIPOR-like receptor involved in zinc metabolism either by altering membrane sterol content or by directly altering cellular zinc levels. The chain is ADIPOR-like receptor IZH3 (IZH3) from Eremothecium gossypii (strain ATCC 10895 / CBS 109.51 / FGSC 9923 / NRRL Y-1056) (Yeast).